The following is a 354-amino-acid chain: MNGTEGPNFYVPMSNKTGIVRSPFEYPQYYLAEPWKYSVLAAYMFLLILLGLPINFMTLYVTIQHKKLRTPLNYILLNLAFANHFMVLCGFTITMYTSLHGYFVFGQTGCYFEGFFATLGGEIALWSLVVLAIERYIVVCKPMSNFRFGENHAMMGVAFTWIMALACAVPPLFGWSRYIPEGMQCSCGVDYYTLKPEVNNESFVIYMFVVHFLIPLIIISFCYGRLVCTVKEAAAQQQESATTQKAEKEVTRMVVIMVIFFLICWVPYAYVAFYIFTHQGSEFGPIFMTVPAFFAKSSAIYNPVIYIMLNKQFRNCMITTLCCGKNPFGDEDASSAATSKTEATSVSTSQVSPA.

The Extracellular portion of the chain corresponds to 1 to 36 (MNGTEGPNFYVPMSNKTGIVRSPFEYPQYYLAEPWK). Asparagine 2 and asparagine 15 each carry an N-linked (GlcNAc...) asparagine glycan. Residues 37 to 61 (YSVLAAYMFLLILLGLPINFMTLYV) traverse the membrane as a helical segment. Over 62–73 (TIQHKKLRTPLN) the chain is Cytoplasmic. Residues 74-96 (YILLNLAFANHFMVLCGFTITMY) form a helical membrane-spanning segment. Topologically, residues 97–110 (TSLHGYFVFGQTGC) are extracellular. A disulfide bridge links cysteine 110 with cysteine 187. Residues 111–133 (YFEGFFATLGGEIALWSLVVLAI) traverse the membrane as a helical segment. A 'Ionic lock' involved in activated form stabilization motif is present at residues 134-136 (ERY). Residues 134 to 152 (ERYIVVCKPMSNFRFGENH) lie on the Cytoplasmic side of the membrane. The helical transmembrane segment at 153–173 (AMMGVAFTWIMALACAVPPLF) threads the bilayer. The Extracellular segment spans residues 174–202 (GWSRYIPEGMQCSCGVDYYTLKPEVNNES). A helical transmembrane segment spans residues 203–224 (FVIYMFVVHFLIPLIIISFCYG). Over 225–252 (RLVCTVKEAAAQQQESATTQKAEKEVTR) the chain is Cytoplasmic. Residues 253–274 (MVVIMVIFFLICWVPYAYVAFY) form a helical membrane-spanning segment. Topologically, residues 275 to 286 (IFTHQGSEFGPI) are extracellular. A helical membrane pass occupies residues 287–308 (FMTVPAFFAKSSAIYNPVIYIM). Position 296 is an N6-(retinylidene)lysine (lysine 296). Topologically, residues 309 to 354 (LNKQFRNCMITTLCCGKNPFGDEDASSAATSKTEATSVSTSQVSPA) are cytoplasmic. Residues cysteine 322 and cysteine 323 are each lipidated (S-palmitoyl cysteine). The tract at residues 331–354 (EDASSAATSKTEATSVSTSQVSPA) is disordered. Low complexity predominate over residues 334-354 (SSAATSKTEATSVSTSQVSPA).

This sequence belongs to the G-protein coupled receptor 1 family. Opsin subfamily. In terms of processing, contains one covalently linked retinal chromophore. Upon light absorption, the covalently bound 11-cis-retinal is converted to all-trans-retinal. After hydrolysis of the Schiff base and release of the covalently bound all-trans-retinal, active rhodopsin is regenerated by binding of a fresh molecule of 11-cis-retinal. As to expression, retina. Localized in the ventral part of the retina.

The protein resides in the membrane. The protein localises to the cell projection. It localises to the cilium. It is found in the photoreceptor outer segment. In terms of biological role, photoreceptor required for image-forming vision at low light intensity. Required for photoreceptor cell viability after birth. May use a mixture of retinal and 3-dehydroretinal as visual pigment. Light-induced isomerization of 11-cis to all-trans retinal triggers a conformational change that activates signaling via G-proteins. Subsequent receptor phosphorylation mediates displacement of the bound G-protein alpha subunit by arrestin and terminates signaling. This chain is Rhodopsin (RHO), found in Aquarana catesbeiana (American bullfrog).